The primary structure comprises 4700 residues: StAR-related lipid transfer protein 9 (4700 aa).

Residues 3-384 (NVQVAVRVRP…LRYASSAKNI (382 aa)) form the Kinesin motor domain. ATP is bound at residue 103-110 (GQTGSGKT). The span at 310-328 (GDSGILSSPSGTSSGGAPS) shows a compositional bias: low complexity. The interval 310–331 (GDSGILSSPSGTSSGGAPSRRQ) is disordered. In terms of domain architecture, FHA spans 498–569 (LKEGTTKIGR…LTQGAVITLG (72 aa)). Basic and acidic residues-rich tracts occupy residues 631 to 646 (QCDE…ETSH) and 867 to 877 (TSEKTSSEEHL). Disordered regions lie at residues 631–652 (QCDE…QIQQ), 851–880 (WDPS…LPQA), 1057–1104 (KKSS…SDTD), and 1128–1188 (ERKW…GFTA). Acidic residues predominate over residues 1134 to 1146 (PEPENSESDDSQL). Phosphoserine is present on Ser1203. Disordered stretches follow at residues 1939–1976 (MPGE…EGKN), 2014–2043 (ERNP…RVNN), 2088–2179 (DQKE…PARD), 2254–2290 (ESQV…QEEN), 2377–2403 (GVEH…SSEA), 2416–2444 (MGSH…SPQD), 2479–2539 (LNKV…PRLL), 2589–2613 (RVAG…EGEA), 2642–2678 (LSAD…RKRR), 2696–2731 (SSSS…PVEE), 2765–2789 (PQET…PRTL), 2821–2852 (VQNS…ASPK), 2892–2955 (SKHS…PCRQ), 3124–3144 (NAQV…PHTL), 3199–3241 (HTCS…GLDG), 3274–3412 (SLRQ…MPST), 3564–3611 (IALG…KGSA), 3766–3790 (SDTS…AEET), 3830–3884 (LPSV…RVQK), 3906–3991 (ASTQ…SPKL), 4033–4086 (PEKV…QHLS), and 4153–4193 (PGGL…EWSK). Positions 2088–2100 (DQKEQEKTDHAFR) are enriched in basic and acidic residues. Residues 2103–2118 (SSGNPLPSKDQPSSPR) are compositionally biased toward polar residues. Residues 2119 to 2129 (QTDDTVFRDSE) are compositionally biased toward basic and acidic residues. The segment covering 2137–2148 (SIGNHPQVQKIT) has biased composition (polar residues). Basic and acidic residues predominate over residues 2153–2169 (RSREGVRESEPVREHTH). The span at 2254–2266 (ESQVAEHVSSSNQ) shows a compositional bias: polar residues. Composition is skewed to basic and acidic residues over residues 2267–2279 (EEPK…EEMP) and 2379–2391 (EHQD…RSHS). The segment covering 2500 to 2510 (QASKPRQKAEK) has biased composition (basic and acidic residues). The span at 2642 to 2653 (LSADSFESLPNT) shows a compositional bias: polar residues. Over residues 2712-2729 (PSSADPLAPDSPRSSAPV) the composition is skewed to low complexity. A compositionally biased stretch (basic and acidic residues) spans 2916–2925 (APCRHPREAL). Polar residues predominate over residues 3124–3141 (NAQVCQTNPEPPATTQGP). Polar residues-rich tracts occupy residues 3274 to 3285 (SLRQNETPQPAA), 3320 to 3339 (SSPT…QELN), and 3368 to 3387 (SGKS…QKAS). The segment covering 3388–3397 (SRLDDGTTDH) has biased composition (basic and acidic residues). Positions 3857-3872 (SSPSPSSPHSPGLFPS) are enriched in low complexity. Residues 3906 to 3924 (ASTQEPGLSPGSLTLSAPS) are compositionally biased toward polar residues. A compositionally biased stretch (low complexity) spans 3958-3975 (LGGSQRGRSSLQRSNGRS). The span at 4048–4065 (EPSQWQSRTENGGESSAS) shows a compositional bias: polar residues. Positions 4334–4387 (SDIELMLQDYQQAHEEAKVEIARARDQLRERTEQEKLRIHQKIISQLLKEEDKL) form a coiled coil. Positions 4397 to 4411 (CTSSNGSLSSGMTSG) are enriched in low complexity. Positions 4397–4419 (CTSSNGSLSSGMTSGYNSSPALS) are disordered. Residues 4483 to 4700 (SYQDLAKHVV…IARLASFLGR (218 aa)) form the START domain.

This sequence belongs to the TRAFAC class myosin-kinesin ATPase superfamily. Kinesin family. In terms of assembly, interacts with ATAD3A. As to expression, expressed in the central nervous system, muscle cells (heart and skeletal muscle), pancreas, prostate and lung.

It localises to the cytoplasm. The protein localises to the cytoskeleton. It is found in the microtubule organizing center. The protein resides in the centrosome. Its subcellular location is the centriole. It localises to the nucleus. Functionally, microtubule-dependent motor protein required for spindle pole assembly during mitosis. Required to stabilize the pericentriolar material (PCM). This is StAR-related lipid transfer protein 9 (STARD9) from Homo sapiens (Human).